Consider the following 183-residue polypeptide: Ankyrin repeat domain-containing protein 39 (183 aa).

4 ANK repeats span residues 30-59, 63-92, 96-125, and 129-158; these read DFER…DPSQ, AGYT…KCDA, GGAT…NPRL, and DGMT…ALKA. Ser-153 is subject to Phosphoserine.

The protein belongs to the ANKRD39 family.

The chain is Ankyrin repeat domain-containing protein 39 (ANKRD39) from Bos taurus (Bovine).